A 74-amino-acid polypeptide reads, in one-letter code: Arabinogalactan protein 20 (74 aa).

The signal sequence occupies residues 1-26; the sequence is MASRNSVAVIALFAFVFAVISPFAGA. Position 27 is a pyrrolidone carboxylic acid (Q27). 3 positions are modified to 4-hydroxyproline: P31, P33, and P35. Residues P31, P33, and P35 are each glycosylated (O-linked (Ara...) hydroxyproline). S37 carries the GPI-anchor amidated serine lipid modification. Residues 38 to 74 constitute a propeptide, removed in mature form; that stretch reads DGTSIDQGIAYLLMVVALVLTYLIHPLDASSSSYTFF.

It belongs to the AG-peptide AGP family. Post-translationally, contains 4-hydroxyproline; hydroxylated on Pro-31, Pro-33 and Pro-35. O-glycosylated on hydroxyprolines; noncontiguous hydroxylproline residues are glycosylated with arabinogalactan.

It is found in the cell membrane. Proteoglycan that seems to be implicated in diverse developmental roles such as differentiation, cell-cell recognition, embryogenesis and programmed cell death. The chain is Arabinogalactan protein 20 from Arabidopsis thaliana (Mouse-ear cress).